A 116-amino-acid chain; its full sequence is Putative superoxide reductase (116 aa).

H20, H46, H52, C101, and H104 together coordinate Fe cation.

It belongs to the desulfoferrodoxin family. Requires Fe cation as cofactor.

The catalysed reaction is reduced [rubredoxin] + superoxide + 2 H(+) = oxidized [rubredoxin] + H2O2. Uses electrons from reduced NADP, by way of rubredoxin and an oxidoreductase, to catalyze the reduction of superoxide to hydrogen peroxide. The sequence is that of Putative superoxide reductase from Methanocaldococcus jannaschii (strain ATCC 43067 / DSM 2661 / JAL-1 / JCM 10045 / NBRC 100440) (Methanococcus jannaschii).